Here is an 81-residue protein sequence, read N- to C-terminus: Cytotoxin 1 (81 aa).

The N-terminal stretch at 1 to 21 (MKTLLLTLVVVTIVCLDLGYT) is a signal peptide. 4 disulfide bridges follow: C24-C42, C35-C59, C63-C74, and C75-C80.

Belongs to the three-finger toxin family. Short-chain subfamily. Type IA cytotoxin sub-subfamily. As to quaternary structure, monomer in solution; Homodimer and oligomer in the presence of negatively charged lipids forming a pore with a size ranging between 20 and 30 Angstroms. In terms of tissue distribution, expressed by the venom gland.

The protein localises to the secreted. It is found in the target cell membrane. In terms of biological role, basic protein that binds to cell membrane and depolarizes cardiomyocytes. It also shows lytic activities on many other cells, including red blood cells. Interaction with sulfatides in the cell membrane induces pore formation and cell internalization and is responsible for cytotoxicity in cardiomyocytes. It targets the mitochondrial membrane and induces mitochondrial swelling and fragmentation. It binds to the integrin alpha-V/beta-3 (ITGAV/ITGB3) with a moderate affinity and inhibits protein kinases C. It also binds with high affinity to heparin. It also causes skeletal muscle necrosis after intramuscular injection into mice. This is Cytotoxin 1 from Naja atra (Chinese cobra).